A 333-amino-acid polypeptide reads, in one-letter code: Serine/threonine-protein phosphatase PP1-beta (333 aa).

Residues Asp-63, His-65, Asp-91, and Asn-123 each coordinate Mn(2+). The Proton donor role is filled by His-124. Mn(2+) contacts are provided by His-172 and His-247. Residues 306-333 (GAGGVGSNRPVTPPRNAPAAQPKKGAKK) are disordered. Positions 322 to 333 (APAAQPKKGAKK) are enriched in low complexity.

Belongs to the PPP phosphatase family. PP-1 subfamily. In terms of assembly, interacts with lab-1; the interaction is direct. Interacts with knl-1; the interaction is direct. The cofactor is Mn(2+). In terms of tissue distribution, expressed in gonads, nervous system, intestine and muscles.

It is found in the cytoplasm. Its subcellular location is the nucleus. The catalysed reaction is O-phospho-L-seryl-[protein] + H2O = L-seryl-[protein] + phosphate. It catalyses the reaction O-phospho-L-threonyl-[protein] + H2O = L-threonyl-[protein] + phosphate. With respect to regulation, inhibited by okadaic acid. In terms of biological role, serine/threonine-protein phosphatase essential for chromosomal dynamics during meiosis and mitosis. During meiosis, promotes chromosomal cohesion and germline immortality via a small RNA-mediated genome silencing pathway. Antagonizes the function of air-2 kinase during meiosis I and mitosis to promote chromatid cohesion and spindle attachment. Dephosphorylates histone H3 at 'Ser-10'. Dephosphorylates histone H3 at 'Thr-3'. Also involved in the activation of chloride channel clh-3 during cell swelling and meiotic maturation. Promotes small RNA-mediated genome silencing over multiple generations. Essential for embryogenesis. In Caenorhabditis elegans, this protein is Serine/threonine-protein phosphatase PP1-beta.